Here is a 673-residue protein sequence, read N- to C-terminus: Inactive polyglycylase TTLL10 (673 aa).

Residues 1–132 (MDHSCTRFIH…ADSDDTNAAG (132 aa)) are disordered. A compositionally biased stretch (basic residues) spans 8-36 (FIHRRGPPTRTRAGFKRGKRPRIQQRPRA). The span at 52–62 (ASQPGPCPAPG) shows a compositional bias: pro residues. The segment covering 89–105 (PDHDADGHCGPDLEGAE) has biased composition (basic and acidic residues). The 398-residue stretch at 155–552 (PGPFFYIGGS…TFRKSLRGQK (398 aa)) folds into the TTL domain. ATP is bound by residues 362-365 (QRYI), K375, and D377. The disordered stretch occupies residues 569–673 (EADPRPHLGG…EREEPENARP (105 aa)). The span at 612–627 (PAPPPLVPQRPRPPGP) shows a compositional bias: pro residues. The span at 661-673 (AKEEREEPENARP) shows a compositional bias: basic and acidic residues.

Inactive polyglycylase. This chain is Inactive polyglycylase TTLL10, found in Homo sapiens (Human).